A 195-amino-acid chain; its full sequence is N-(5'-phosphoribosyl)anthranilate isomerase (195 aa).

Belongs to the TrpF family.

It carries out the reaction N-(5-phospho-beta-D-ribosyl)anthranilate = 1-(2-carboxyphenylamino)-1-deoxy-D-ribulose 5-phosphate. Its pathway is amino-acid biosynthesis; L-tryptophan biosynthesis; L-tryptophan from chorismate: step 3/5. The sequence is that of N-(5'-phosphoribosyl)anthranilate isomerase from Methanoregula boonei (strain DSM 21154 / JCM 14090 / 6A8).